A 163-amino-acid polypeptide reads, in one-letter code: IQ domain-containing protein F2 (163 aa).

IQ domains are found at residues 42–71 and 98–127; these read RVIA…STWI and RERA…AIYV.

This is IQ domain-containing protein F2 (IQCF2) from Bos taurus (Bovine).